The sequence spans 492 residues: Probable malate:quinone oxidoreductase 1 (492 aa).

Belongs to the MQO family. FAD serves as cofactor.

It carries out the reaction (S)-malate + a quinone = a quinol + oxaloacetate. The protein operates within carbohydrate metabolism; tricarboxylic acid cycle; oxaloacetate from (S)-malate (quinone route): step 1/1. The protein is Probable malate:quinone oxidoreductase 1 of Staphylococcus aureus (strain MW2).